Here is a 464-residue protein sequence, read N- to C-terminus: ATP synthase subunit beta 2 (464 aa).

ATP is bound at residue 147–154 (GGAGVGKT).

The protein belongs to the ATPase alpha/beta chains family. As to quaternary structure, F-type ATPases have 2 components, CF(1) - the catalytic core - and CF(0) - the membrane proton channel. CF(1) has five subunits: alpha(3), beta(3), gamma(1), delta(1), epsilon(1). CF(0) has four main subunits: a(1), b(1), b'(1) and c(9-12).

It is found in the cell inner membrane. The enzyme catalyses ATP + H2O + 4 H(+)(in) = ADP + phosphate + 5 H(+)(out). Functionally, produces ATP from ADP in the presence of a proton gradient across the membrane. The catalytic sites are hosted primarily by the beta subunits. The protein is ATP synthase subunit beta 2 of Cereibacter sphaeroides (strain ATCC 17029 / ATH 2.4.9) (Rhodobacter sphaeroides).